Here is a 392-residue protein sequence, read N- to C-terminus: V-type proton ATPase subunit C (392 aa).

Alanine 2 is subject to N-acetylalanine.

It belongs to the V-ATPase C subunit family. In terms of assembly, V-ATPase is a heteromultimeric enzyme composed of a peripheral catalytic V1 complex (components A to H) attached to an integral membrane V0 proton pore complex (components: a, c, c', c'', d, e, f and VOA1). Interacts directly with VMA4.

Its subcellular location is the vacuole membrane. In terms of biological role, subunit of the V1 complex of vacuolar(H+)-ATPase (V-ATPase), a multisubunit enzyme composed of a peripheral complex (V1) that hydrolyzes ATP and a membrane integral complex (V0) that translocates protons. V-ATPase is responsible for acidifying and maintaining the pH of intracellular compartments. Subunit C is necessary for the assembly of the catalytic sector of the enzyme and is likely to have a specific function in its catalytic activity. Reversibly leaves the enzyme after glucose depletion, causing the catalytic subcomplex V1 to detach from the V0 section. The polypeptide is V-type proton ATPase subunit C (Saccharomyces cerevisiae (strain ATCC 204508 / S288c) (Baker's yeast)).